Consider the following 282-residue polypeptide: MSADTLQIAYSPCPNDTFVFDALAHGRVPGAPALDVTFADIDITNGMAERGELDVLKVSYAVLPYVLDDWALLPCGGALGRGCGPLVLTREADADLRGRTVAVPSETSTAYLLFRLWAADTVPGGVGEIVVMPFHEIMPAVRDGKVDAGLVIHEARFTYQNYGLHKLADMGEHWEHTTGLPIPLGAIIARRSLGAPALTRLADAVRASVRAAWDDPEASRPYVMEHAQEMDPAVADQHIGLYVNEFTADLGEDGYAAIRGLLTRAAAEGLVPALGPDALAFP.

Residues K57 to S59 and T109 to A110 each bind substrate. The Proton acceptor role is filled by H153.

The protein belongs to the MqnA/MqnD family. MqnD subfamily.

The catalysed reaction is cyclic dehypoxanthinylfutalosinate = 1,4-dihydroxy-6-naphthoate + dihydroxyacetone. It participates in quinol/quinone metabolism; menaquinone biosynthesis. Catalyzes the conversion of cyclic dehypoxanthine futalosine (cyclic DHFL) into 1,4-dihydroxy-6-naphthoate, a step in the biosynthesis of menaquinone (MK, vitamin K2). In Streptomyces coelicolor (strain ATCC BAA-471 / A3(2) / M145), this protein is 1,4-dihydroxy-6-naphtoate synthase.